Here is a 1669-residue protein sequence, read N- to C-terminus: MGPRLGVWLLLLLAALLLHEESSRAAAKGGCAGSGCGKCDCHGVKGQKGERGLPGLQGVIGFPGMQGPEGPQGPPGQKGDTGEPGLPGTKGTRGPSGVPGYPGNPGLPGIPGQDGPPGPPGIPGCNGTKGERGPVGPPGLPGFAGNPGPPGLPGMKGDPGEILGHIPGTLLKGERGYPGQPGAPGSPGLPGLQGPVGPPGFTGPPGPPGPPGPPGEKGQMGLSFQGPKGEKGDQGVSGPPGLPGQAQVITKGDTAMRGEKGQKGEPGFPGLPGFGEKGEPGKPGPRGKPGKDGEKGEKGSPGFPGDSGYPGQPGQDGLKGEKGEAGPPGLPGTVIGTGPLGEKGEPGYPGGPGAKGETGPKGFPGIPGQPGPPGFPTPGLIGAPGFPGDRGEKGEPGLPGVSLPGPSGRDGLPGPPGPPGPPGQPGHTNGIVECQPGPPGDQGPPGIPGQPGLTGEVGEKGQKGDSCLVCDTAELRGPPGPQGPPGEIGFPGQPGAKGDRGLPGRDGLEGLPGPQGAPGLMGQPGAKGEPGEIYFDIRLKGDKGDPGFPGQPGMPGRAGSPGRDGQPGLPGPRGSPGSVGLKGERGPPGGVGFPGSRGDIGPPGPPGFGPIGPIGDKGQIGFPGTPGAPGQPGPKGEAGKVVPLPGPPGAEGLPGSPGFQGPQGDRGFPGSPGRPGLPGEKGAIGQPGIGFPGPPGPKGVDGLPGDAGPPGNPGRQGFNGLPGNPGPPGQKGEPGVGLPGLKGLPGIPGIPGTPGEKGNVGGPGIPGEHGAIGPPGLQGLRGDPGPPGFQGPKGAPGVPGIGPPGAMGPPGGQGPPGSSGPPGVKGEKGFPGFPGLDMPGPKGDKGSQGLPGLTGQSGLPGLPGQQGTPGQPGIPGPKGEMGVMGTPGQPGSPGPAGVPGLPGAKGDHGFPGSSGPRGDPGFKGDKGDVGLPGKPGSMDKVDMGSMKGEKGDQGEKGQTGPTGDKGSRGDPGTPGVPGKDGQAGHPGQPGPKGDPGVSGIPGAPGLPGPKGSAGGMGLPGMPGPKGVAGIPGPQGIPGLPGDKGAKGEKGQAGLPGIGIPGRPGDKGDQGLAGFPGSPGEKGEKGSTGIPGMPGSPGPKGSPGSVGYPGSPGLPGEKGDKGLPGLDGIPGIKGEAGLPGKPGPTGPAGQKGEPGSDGIPGSVGEKGESGLPGRGFPGFPGSKGDKGSKGDVGFPGLSGSPGIPGSKGEQGFMGPPGPQGQPGLPGTPGHAVEGPKGDRGPQGQPGLPGRPGPMGPPGLPGLEGLKGERGNPGWPGTPGAPGPKGDPGFQGMPGIGGSPGITGAKGDVGPPGVPGFHGQKGAPGLQGVKGDQGDQGFPGTKGLPGPPGPPGPFSIIKGEPGLPGPEGPAGLKGLQGPPGPKGQQGVTGSVGLPGPPGEPGFDGAPGQKGETGPFGPPGPRGFPGPPGPDGLPGSMGPPGTPSVDHGFLVTRHSQTTDDPQCPPGTKILYHGYSLLYVQGNERAHGQDLGTAGSCLRKFSTMPFLFCNINNVCNFASRNDYSYWLSTPEPMPMSMAPITGENIRPFISRCAVCEAPAMVMAVHSQTIQIPQCPTGWSSLWIGYSFVMHTSAGAEGSGQALASPGSCLEEFRSAPFIECHGRGTCNYYANAYSFWLATIERSEMFKKPTPSTLKAGELRTHVSRCQVCMRRT.

An N-terminal signal peptide occupies residues 1–27; that stretch reads MGPRLGVWLLLLLAALLLHEESSRAAA. Residues 28 to 172 constitute a propeptide, N-terminal propeptide (7S domain); it reads KGGCAGSGCG…LGHIPGTLLK (145 aa). A disordered region spans residues 50-1445; it reads ERGLPGLQGV…PPGTPSVDHG (1396 aa). A triple-helical region region spans residues 173 to 1440; the sequence is GERGYPGQPG…PGSMGPPGTP (1268 aa). Residues 196–214 show a composition bias toward pro residues; the sequence is VGPPGFTGPPGPPGPPGPP. P204, P207, and P210 each carry 3-hydroxyproline. Composition is skewed to basic and acidic residues over residues 254–263 and 289–298; these read TAMRGEKGQK and PGKDGEKGEK. Residues 347–356 show a composition bias toward gly residues; the sequence is GYPGGPGAKG. Over residues 357–366 the composition is skewed to low complexity; sequence ETGPKGFPGI. Over residues 367–376 the composition is skewed to pro residues; it reads PGQPGPPGFP. The span at 396-412 shows a compositional bias: low complexity; it reads PGLPGVSLPGPSGRDGL. Composition is skewed to pro residues over residues 413–424 and 436–448; these read PGPPGPPGPPGQ and PGPPGDQGPPGIP. Positions 485–494 are enriched in low complexity; it reads PGEIGFPGQP. 2 stretches are compositionally biased toward basic and acidic residues: residues 497 to 508 and 535 to 545; these read KGDRGLPGRDGL and FDIRLKGDKGD. The span at 586–595 shows a compositional bias: gly residues; the sequence is GPPGGVGFPG. 3-hydroxyproline is present on residues P587 and P602. Residue P603 is modified to 4-hydroxyproline. At P605 the chain carries 3-hydroxyproline. P606, P623, P626, P629, and P632 each carry 4-hydroxyproline. The residue at position 647 (P647) is a 3-hydroxyproline. Gly residues-rich tracts occupy residues 758-767 and 797-817; these read GNVGGPGIPG and GVPGIGPPGAMGPPGGQGPPG. A compositionally biased stretch (low complexity) spans 847–871; sequence SQGLPGLTGQSGLPGLPGQQGTPGQ. Positions 937–955 are enriched in basic and acidic residues; that stretch reads SMDKVDMGSMKGEKGDQGE. Gly residues predominate over residues 1011-1020; the sequence is GSAGGMGLPG. Composition is skewed to low complexity over residues 1030–1040, 1101–1114, and 1193–1212; these read IPGPQGIPGLP, SPGSVGYPGSPGLP, and FPGLSGSPGIPGSKGEQGFM. At P1214 the chain carries 3-hydroxyproline. Over residues 1247-1258 the composition is skewed to pro residues; sequence PGRPGPMGPPGL. The span at 1290–1299 shows a compositional bias: gly residues; the sequence is GMPGIGGSPG. Residues 1413-1428 show a composition bias toward pro residues; that stretch reads FGPPGPRGFPGPPGPD. P1424 is modified (3-hydroxyproline). The 225-residue stretch at 1445–1669 folds into the Collagen IV NC1 domain; that stretch reads GFLVTRHSQT…SRCQVCMRRT (225 aa). Cystine bridges form between C1460/C1551, C1493/C1548, C1505/C1511, C1570/C1665, C1604/C1662, and C1616/C1622. An S-Lysyl-methionine sulfilimine (Met-Lys) (interchain with K-1651) cross-link involves residue M1533. An S-Lysyl-methionine sulfilimine (Lys-Met) (interchain with M-1533) cross-link involves residue K1651.

Belongs to the type IV collagen family. In terms of assembly, there are six type IV collagen isoforms, alpha 1(IV)-alpha 6(IV), each of which can form a triple helix structure with 2 other chains to generate type IV collagen network. Interacts with EFEMP2. Lysines at the third position of the tripeptide repeating unit (G-X-Y) are hydroxylated in all cases. The modified lysines can be O-glycosylated. Post-translationally, contains 4-hydroxyproline. Prolines at the third position of the tripeptide repeating unit (G-X-Y) are hydroxylated in some or all of the chains. In terms of processing, contains 3-hydroxyproline. This modification occurs on the first proline residue in the sequence motif Gly-Pro-Hyp, where Hyp is 4-hydroxyproline. Type IV collagens contain numerous cysteine residues which are involved in inter- and intramolecular disulfide bonding. 12 of these, located in the NC1 domain, are conserved in all known type IV collagens. Post-translationally, the trimeric structure of the NC1 domains is stabilized by covalent bonds (sulfilimine cross-links) between Lys and Met residues. These cross-links are important for the mechanical stability of the basement membrane. Sulfilimine cross-link is catalyzed by PXDN. In terms of processing, proteolytic processing produces the C-terminal NC1 peptide, arresten.

It localises to the secreted. The protein resides in the extracellular space. It is found in the extracellular matrix. The protein localises to the basement membrane. Its function is as follows. Type IV collagen is the major structural component of glomerular basement membranes (GBM), forming a 'chicken-wire' meshwork together with laminins, proteoglycans and entactin/nidogen. In terms of biological role, arresten, comprising the C-terminal NC1 domain, inhibits angiogenesis and tumor formation. The C-terminal half is found to possess the anti-angiogenic activity. Specifically inhibits endothelial cell proliferation, migration and tube formation. In Bos taurus (Bovine), this protein is Collagen alpha-1(IV) chain.